A 356-amino-acid chain; its full sequence is MSRLSLVLILVAGLFATALAGPATFADKNPIRQVVFPDELENGILQVVGQTRSALSFARFAIRHRKRYDSVEEIKQRFEIFLDNLKMIRSHNRKGLSYKLGINEFTDLTWDEFRKHKLGASQNCSATTKGNLKLTNVVLPETKDWRKDGIVSPVKAQGKCGSCWTFSTTGALEAAYAQAFGKGISLSEQQLVDCAGAFNNFGCNGGLPSQAFEYIKFNGGLDTEEAYPYTGKNGICKFSQANIGVKVISSVNITLGAEYELKYAVALVRPVSVAFEVVKGFKQYKSGVYASTECGDTPMDVNHAVLAVGYGVENGTPYWLIKNSWGADWGEDGYFKMEMGKNMCGVATCASYPIVA.

Residues 1-16 (MSRLSLVLILVAGLFA) form the signal peptide. The propeptide at 17 to 138 (TALAGPATFA…KGNLKLTNVV (122 aa)) is activation peptide. Asn123 is a glycosylation site (N-linked (GlcNAc...) asparagine). 2 cysteine pairs are disulfide-bonded: Cys160–Cys203 and Cys194–Cys236. Cys163 is an active-site residue. The N-linked (GlcNAc...) asparagine glycan is linked to Asn252. A disulfide bridge links Cys294 with Cys344. Active-site residues include His303 and Asn323.

It belongs to the peptidase C1 family. As to expression, predominantly expressed in stem and root.

Its subcellular location is the vacuole. This Solanum lycopersicum (Tomato) protein is Cysteine proteinase 3 (CYP-3).